The chain runs to 90 residues: Progonadoliberin-1 (90 aa).

Positions 1–21 are cleaved as a signal peptide; sequence MILKLMAGILLLTVCLEGCSS. Q22 is modified (pyrrolidone carboxylic acid). The residue at position 31 (G31) is a Glycine amide.

The protein belongs to the GnRH family. In terms of processing, the precursor is cleaved by ACE, which removes the Gly-Lys-Arg peptide at the C-terminus, leading to mature hormone. The mature form of Gonadoliberin-1 is also cleaved and degraded by ACE.

It localises to the secreted. In terms of biological role, stimulates the secretion of gonadotropins; it stimulates the secretion of both luteinizing and follicle-stimulating hormones. The polypeptide is Progonadoliberin-1 (Gnrh1) (Mus musculus (Mouse)).